A 697-amino-acid chain; its full sequence is Pentatricopeptide repeat-containing protein At5g46460, mitochondrial (697 aa).

The N-terminal 36 residues, 1 to 36 (MWSRAIFQRFRFRAFSISHVIHGKCYRSFSVTVEFQ), are a transit peptide targeting the mitochondrion. PPR repeat units lie at residues 39–64 (EVLI…VPSP), 65–95 (HVSL…MPVR), 96–130 (DVVS…SVVS), 131–157 (WTAM…MPVK), 158–192 (DTAA…NVIS), 193–223 (WTTM…CIKS), 224–258 (TSRP…GFLY), 259–289 (EEYV…KVHE), 290–324 (QVAV…SILP), 325–359 (NQST…GLET), 360–390 (DAFV…IFKK), 391–425 (SIVS…NKEP), 426–456 (DEIT…MSSG), and 463–497 (KIQH…PNEM). The tract at residues 498–573 (VWLALLSACR…KPGSSWVVIR (76 aa)) is type E motif. The type E(+) motif stretch occupies residues 574–602 (GKKHEFFSGDQPHCSRIYEKLEFLREKLK). Residues 603 to 697 (ELGYAPDYRS…NGTCSCGDYW (95 aa)) are type DYW motif.

Belongs to the PPR family. PCMP-H subfamily.

The protein resides in the mitochondrion. In Arabidopsis thaliana (Mouse-ear cress), this protein is Pentatricopeptide repeat-containing protein At5g46460, mitochondrial (PCMP-H49).